The chain runs to 141 residues: Large ribosomal subunit protein uL11 (141 aa).

A disordered region spans residues 1–23 (MAKQVTGQAKFQVPGGQATPAPP).

It belongs to the universal ribosomal protein uL11 family. Part of the ribosomal stalk of the 50S ribosomal subunit. Interacts with L10 and the large rRNA to form the base of the stalk. L10 forms an elongated spine to which L12 dimers bind in a sequential fashion forming a multimeric L10(L12)X complex. In terms of processing, one or more lysine residues are methylated.

In terms of biological role, forms part of the ribosomal stalk which helps the ribosome interact with GTP-bound translation factors. This chain is Large ribosomal subunit protein uL11, found in Rhodopirellula baltica (strain DSM 10527 / NCIMB 13988 / SH1).